We begin with the raw amino-acid sequence, 102 residues long: Large ribosomal subunit protein bL21 (102 aa).

Residues 77–88 (KPKKHTHTKQGH) show a composition bias toward basic residues. Positions 77–102 (KPKKHTHTKQGHRQPYTKVTINKINA) are disordered. A compositionally biased stretch (polar residues) spans 93 to 102 (TKVTINKINA).

Belongs to the bacterial ribosomal protein bL21 family. As to quaternary structure, part of the 50S ribosomal subunit. Contacts protein L20.

This protein binds to 23S rRNA in the presence of protein L20. This is Large ribosomal subunit protein bL21 from Limosilactobacillus reuteri (strain DSM 20016) (Lactobacillus reuteri).